The chain runs to 183 residues: MELNFYTNKVKLEMEKAVQTYSNQIAKISAGKANPKLISGIKFIYYDEPMSIEEMAAISVPEAQQILIKPYDIKTTKNIIESLNKMNYDMQIVDEGAQVRLKFPALTTERRKELVKQLVKLNESAKVAIRQVRQDENKLIKKDEELSEDEQKKYLDEIQKLTDKYIFKIEELNKDKEKELMTI.

Belongs to the RRF family.

The protein localises to the cytoplasm. In terms of biological role, responsible for the release of ribosomes from messenger RNA at the termination of protein biosynthesis. May increase the efficiency of translation by recycling ribosomes from one round of translation to another. The sequence is that of Ribosome-recycling factor from Mycoplasma mobile (strain ATCC 43663 / 163K / NCTC 11711) (Mesomycoplasma mobile).